Consider the following 210-residue polypeptide: Large ribosomal subunit protein uL4 (210 aa).

In terms of assembly, part of the 50S ribosomal subunit. In terms of processing, the N-terminus is blocked.

Its function is as follows. One of the primary rRNA binding proteins, this protein initially binds near the 5'-end of the 23S rRNA. It is important during the early stages of 50S assembly. It makes multiple contacts with different domains of the 23S rRNA in the assembled 50S subunit and ribosome. Forms part of the polypeptide exit tunnel. Functionally, this protein can be incorporated into E.coli ribosomes in vivo, which resulted in decreased peptidyltransferase (Ptase) activity of the hybrid ribosomes. The hybrid 50S subunits associate less well with 30S subunits to form the ribosome. In Thermus thermophilus (strain ATCC 27634 / DSM 579 / HB8), this protein is Large ribosomal subunit protein uL4 (rplD).